The primary structure comprises 162 residues: MDNLNINFINDDEHPIPSQDLLLKCLQLVADKHHISHAEVNLNIVSNDEIQQINKQFRNKDKPTNIISFKFEKPQGLPDDIANDFLGDIVIAPAVLENEAKEQNKELNDHWQHIFIHGLLHLLGYNHQDDQEAEVMENLEIQLLAQLGIANPYIEQENQNGR.

H117, H121, and H127 together coordinate Zn(2+).

This sequence belongs to the endoribonuclease YbeY family. The cofactor is Zn(2+).

The protein resides in the cytoplasm. Functionally, single strand-specific metallo-endoribonuclease involved in late-stage 70S ribosome quality control and in maturation of the 3' terminus of the 16S rRNA. This is Endoribonuclease YbeY from Francisella tularensis subsp. tularensis (strain WY96-3418).